The chain runs to 332 residues: Phosphate acyltransferase (332 aa).

The protein belongs to the PlsX family. Homodimer. Probably interacts with PlsY.

The protein resides in the cytoplasm. It catalyses the reaction a fatty acyl-[ACP] + phosphate = an acyl phosphate + holo-[ACP]. Its pathway is lipid metabolism; phospholipid metabolism. Its function is as follows. Catalyzes the reversible formation of acyl-phosphate (acyl-PO(4)) from acyl-[acyl-carrier-protein] (acyl-ACP). This enzyme utilizes acyl-ACP as fatty acyl donor, but not acyl-CoA. The chain is Phosphate acyltransferase from Streptococcus sanguinis (strain SK36).